We begin with the raw amino-acid sequence, 467 residues long: Cytochrome c-552 (467 aa).

The N-terminal stretch at M1–A27 is a signal peptide. Residue H87 participates in heme c binding. Heme is bound by residues C115, C118, and K119. 6 residues coordinate heme c: C153, C156, H157, C195, C198, and H199. Residues E201, Y202, K250, and Q252 each contribute to the Ca(2+) site. Y202 is a substrate binding site. H253 serves as a coordination point for substrate. Heme c-binding residues include H264, C271, C274, H275, H290, C303, C306, H307, and H382.

It belongs to the cytochrome c-552 family. It depends on Ca(2+) as a cofactor. Heme c is required as a cofactor.

The protein localises to the periplasm. It carries out the reaction 6 Fe(III)-[cytochrome c] + NH4(+) + 2 H2O = 6 Fe(II)-[cytochrome c] + nitrite + 8 H(+). Its pathway is nitrogen metabolism; nitrate reduction (assimilation). Its function is as follows. Catalyzes the reduction of nitrite to ammonia, consuming six electrons in the process. The chain is Cytochrome c-552 from Shewanella sp. (strain MR-4).